The chain runs to 494 residues: Guanosine-5'-triphosphate,3'-diphosphate pyrophosphatase (494 aa).

This sequence belongs to the GppA/Ppx family. GppA subfamily.

It carries out the reaction guanosine 3'-diphosphate 5'-triphosphate + H2O = guanosine 3',5'-bis(diphosphate) + phosphate + H(+). It participates in purine metabolism; ppGpp biosynthesis; ppGpp from GTP: step 2/2. Catalyzes the conversion of pppGpp to ppGpp. Guanosine pentaphosphate (pppGpp) is a cytoplasmic signaling molecule which together with ppGpp controls the 'stringent response', an adaptive process that allows bacteria to respond to amino acid starvation, resulting in the coordinated regulation of numerous cellular activities. The chain is Guanosine-5'-triphosphate,3'-diphosphate pyrophosphatase from Escherichia coli O127:H6 (strain E2348/69 / EPEC).